A 367-amino-acid polypeptide reads, in one-letter code: Pectate lyase 1 (367 aa).

Positions 1–21 (MASPCLIAFLVFLCAIVSCCS) are cleaved as a signal peptide. Cystine bridges form between C28/C45 and C128/C147. An N-linked (GlcNAc...) asparagine glycan is attached at N148. D170 contributes to the Ca(2+) binding site. N-linked (GlcNAc...) asparagine glycosylation occurs at N178. The Ca(2+) site is built by D194 and D198. The active site involves R250. C306 and C312 are oxidised to a cystine.

Belongs to the polysaccharide lyase 1 family. Amb a subfamily. It depends on Ca(2+) as a cofactor.

It catalyses the reaction Eliminative cleavage of (1-&gt;4)-alpha-D-galacturonan to give oligosaccharides with 4-deoxy-alpha-D-galact-4-enuronosyl groups at their non-reducing ends.. It functions in the pathway glycan metabolism; pectin degradation; 2-dehydro-3-deoxy-D-gluconate from pectin: step 2/5. In terms of biological role, has pectate lyase activity. This is Pectate lyase 1 from Juniperus virginiana (Eastern redcedar).